Here is a 683-residue protein sequence, read N- to C-terminus: Glycine--tRNA ligase beta subunit (683 aa).

This sequence belongs to the class-II aminoacyl-tRNA synthetase family. In terms of assembly, tetramer of two alpha and two beta subunits.

The protein resides in the cytoplasm. It carries out the reaction tRNA(Gly) + glycine + ATP = glycyl-tRNA(Gly) + AMP + diphosphate. This chain is Glycine--tRNA ligase beta subunit, found in Pseudomonas putida (strain GB-1).